The following is a 187-amino-acid chain: Protein GrpE (187 aa).

The segment covering Met-1–Glu-17 has biased composition (low complexity). The disordered stretch occupies residues Met-1–Glu-27.

This sequence belongs to the GrpE family. Homodimer.

It localises to the cytoplasm. Functionally, participates actively in the response to hyperosmotic and heat shock by preventing the aggregation of stress-denatured proteins, in association with DnaK and GrpE. It is the nucleotide exchange factor for DnaK and may function as a thermosensor. Unfolded proteins bind initially to DnaJ; upon interaction with the DnaJ-bound protein, DnaK hydrolyzes its bound ATP, resulting in the formation of a stable complex. GrpE releases ADP from DnaK; ATP binding to DnaK triggers the release of the substrate protein, thus completing the reaction cycle. Several rounds of ATP-dependent interactions between DnaJ, DnaK and GrpE are required for fully efficient folding. This Thioalkalivibrio sulfidiphilus (strain HL-EbGR7) protein is Protein GrpE.